A 424-amino-acid chain; its full sequence is Adenylosuccinate synthetase (424 aa).

GTP is bound by residues 11–17 (GDEGKGK) and 39–41 (GHT). D12 (proton acceptor) is an active-site residue. Mg(2+) is bound by residues D12 and G39. IMP-binding positions include 12 to 15 (DEGK), 37 to 40 (NAGH), T127, R141, Q223, T238, and R302. The Proton donor role is filled by H40. Residue 298–304 (TTTGRGR) coordinates substrate. GTP contacts are provided by residues R304, 330–332 (KLD), and 412–414 (SVG).

It belongs to the adenylosuccinate synthetase family. Homodimer. Mg(2+) is required as a cofactor.

It is found in the cytoplasm. It carries out the reaction IMP + L-aspartate + GTP = N(6)-(1,2-dicarboxyethyl)-AMP + GDP + phosphate + 2 H(+). It participates in purine metabolism; AMP biosynthesis via de novo pathway; AMP from IMP: step 1/2. Its function is as follows. Plays an important role in the de novo pathway of purine nucleotide biosynthesis. Catalyzes the first committed step in the biosynthesis of AMP from IMP. This chain is Adenylosuccinate synthetase, found in Methanosarcina barkeri (strain Fusaro / DSM 804).